Reading from the N-terminus, the 448-residue chain is Glucose-6-phosphate isomerase (448 aa).

Residue E290 is the Proton donor of the active site. Residues H311 and K425 contribute to the active site.

This sequence belongs to the GPI family.

It localises to the cytoplasm. It catalyses the reaction alpha-D-glucose 6-phosphate = beta-D-fructose 6-phosphate. Its pathway is carbohydrate biosynthesis; gluconeogenesis. It participates in carbohydrate degradation; glycolysis; D-glyceraldehyde 3-phosphate and glycerone phosphate from D-glucose: step 2/4. In terms of biological role, catalyzes the reversible isomerization of glucose-6-phosphate to fructose-6-phosphate. The protein is Glucose-6-phosphate isomerase of Oceanobacillus iheyensis (strain DSM 14371 / CIP 107618 / JCM 11309 / KCTC 3954 / HTE831).